The sequence spans 101 residues: Small ribosomal subunit protein uS14 (101 aa).

Belongs to the universal ribosomal protein uS14 family. As to quaternary structure, part of the 30S ribosomal subunit. Contacts proteins S3 and S10.

Functionally, binds 16S rRNA, required for the assembly of 30S particles and may also be responsible for determining the conformation of the 16S rRNA at the A site. The chain is Small ribosomal subunit protein uS14 from Chromohalobacter salexigens (strain ATCC BAA-138 / DSM 3043 / CIP 106854 / NCIMB 13768 / 1H11).